A 299-amino-acid polypeptide reads, in one-letter code: Urease accessory protein UreD (299 aa).

It belongs to the UreD family. As to quaternary structure, ureD, UreF and UreG form a complex that acts as a GTP-hydrolysis-dependent molecular chaperone, activating the urease apoprotein by helping to assemble the nickel containing metallocenter of UreC. The UreE protein probably delivers the nickel.

It is found in the cytoplasm. Its function is as follows. Required for maturation of urease via the functional incorporation of the urease nickel metallocenter. The polypeptide is Urease accessory protein UreD (Prochlorococcus marinus (strain MIT 9303)).